The sequence spans 400 residues: MNFLRMSELSLTDKVVLIREDLNVPIKAGKVASDARLQASLPTIKMALEKGAAVIVCSHLGRPTEGNPEAIYSLAPVADYLSDKLSAPVTLNSDYFTQGVAIEAGEVVLLENVRFNEGEKKNDAALAQKYADLCDVFVMDAFGTAHRAQASTEGVTQAMHKAGKTACAGPLLAAELDALSLALETPAQPMLAIVGGSKVSTKLEVLHSLAELCSQIIVGGGIANTFLAAQGHSVGASLYEADLLDTAREIMGKTEILLPEYVVVADKSDIDFADFTGSLQQASATIKSVDTIGENDMILDIAPDSAIKLAEAITKAKTILWNGPVGVFEVDAFGQGTQIVAEAVKNSQGFSIAGGGDTLAAIDKYQVADGVSYMSTGGGAFLEFVEGKVLPAVAALEINA.

Substrate is bound by residues 21–23 (DLN), Arg36, 59–62 (HLGR), Arg114, and Arg147. ATP contacts are provided by residues Lys202, Glu329, and 355 to 358 (GGDT).

It belongs to the phosphoglycerate kinase family. In terms of assembly, monomer.

It localises to the cytoplasm. It carries out the reaction (2R)-3-phosphoglycerate + ATP = (2R)-3-phospho-glyceroyl phosphate + ADP. The protein operates within carbohydrate degradation; glycolysis; pyruvate from D-glyceraldehyde 3-phosphate: step 2/5. The sequence is that of Phosphoglycerate kinase from Psychrobacter cryohalolentis (strain ATCC BAA-1226 / DSM 17306 / VKM B-2378 / K5).